The primary structure comprises 380 residues: Cytochrome b (380 aa).

A run of 4 helical transmembrane segments spans residues 34–54 (FGSLLAVCLMTQILTGLLLAM), 78–99 (WLIRNLHANGASFFFICIFLHI), 114–134 (WNTGVILLLTLMATAFVGYVL), and 179–199 (FFALHFLLPFAIAGITIIHLT). Residues histidine 84 and histidine 98 each contribute to the heme b site. Heme b contacts are provided by histidine 183 and histidine 197. Histidine 202 contacts a ubiquinone. Transmembrane regions (helical) follow at residues 227–247 (FKDILGLTLMLTPFLTLALFS), 289–309 (LGGVLALAASVLILFLIPFLH), 321–341 (LSQTLFWLLVANLLILTWIGS), and 348–368 (FIIIGQMASLSYFTILLILFP).

The protein belongs to the cytochrome b family. In terms of assembly, the cytochrome bc1 complex contains 11 subunits: 3 respiratory subunits (MT-CYB, CYC1 and UQCRFS1), 2 core proteins (UQCRC1 and UQCRC2) and 6 low-molecular weight proteins (UQCRH/QCR6, UQCRB/QCR7, UQCRQ/QCR8, UQCR10/QCR9, UQCR11/QCR10 and a cleavage product of UQCRFS1). This cytochrome bc1 complex then forms a dimer. Requires heme b as cofactor.

The protein localises to the mitochondrion inner membrane. Its function is as follows. Component of the ubiquinol-cytochrome c reductase complex (complex III or cytochrome b-c1 complex) that is part of the mitochondrial respiratory chain. The b-c1 complex mediates electron transfer from ubiquinol to cytochrome c. Contributes to the generation of a proton gradient across the mitochondrial membrane that is then used for ATP synthesis. This Gallus gallus (Chicken) protein is Cytochrome b (MT-CYB).